Here is a 149-residue protein sequence, read N- to C-terminus: Transcriptional repressor NrdR (149 aa).

A zinc finger lies at 3 to 34 (CPFCSENDTKVIDSRLVADGHQVRRRRQCLAC). An ATP-cone domain is found at 49-139 (PKVIKSNGNR…VYRSFEDIRE (91 aa)).

It belongs to the NrdR family. Zn(2+) is required as a cofactor.

In terms of biological role, negatively regulates transcription of bacterial ribonucleotide reductase nrd genes and operons by binding to NrdR-boxes. This chain is Transcriptional repressor NrdR, found in Vibrio parahaemolyticus serotype O3:K6 (strain RIMD 2210633).